The chain runs to 329 residues: uncharacterized protein (329 aa).

2 coiled-coil regions span residues 57-120 and 225-251; these read KKEE…QEVT and QRQRQEEVQEVLQEAEKTHQATLGNMM.

This is an uncharacterized protein from Homo sapiens (Human).